The following is a 185-amino-acid chain: Ribosome-recycling factor (185 aa).

This sequence belongs to the RRF family.

The protein localises to the cytoplasm. Its function is as follows. Responsible for the release of ribosomes from messenger RNA at the termination of protein biosynthesis. May increase the efficiency of translation by recycling ribosomes from one round of translation to another. The chain is Ribosome-recycling factor from Nitrosospira multiformis (strain ATCC 25196 / NCIMB 11849 / C 71).